The chain runs to 364 residues: Dual-specificity RNA methyltransferase RlmN (364 aa).

Residue E91 is the Proton acceptor of the active site. Residues 97 to 333 (ESDRGTLCIS…VTVRKTRGDD (237 aa)) form the Radical SAM core domain. Residues C104 and C338 are joined by a disulfide bond. [4Fe-4S] cluster-binding residues include C111, C115, and C118. Residues 164-165 (GE), S196, 218-220 (SLH), and N295 each bind S-adenosyl-L-methionine. C338 (S-methylcysteine intermediate) is an active-site residue.

Belongs to the radical SAM superfamily. RlmN family. It depends on [4Fe-4S] cluster as a cofactor.

It is found in the cytoplasm. It catalyses the reaction adenosine(2503) in 23S rRNA + 2 reduced [2Fe-2S]-[ferredoxin] + 2 S-adenosyl-L-methionine = 2-methyladenosine(2503) in 23S rRNA + 5'-deoxyadenosine + L-methionine + 2 oxidized [2Fe-2S]-[ferredoxin] + S-adenosyl-L-homocysteine. The enzyme catalyses adenosine(37) in tRNA + 2 reduced [2Fe-2S]-[ferredoxin] + 2 S-adenosyl-L-methionine = 2-methyladenosine(37) in tRNA + 5'-deoxyadenosine + L-methionine + 2 oxidized [2Fe-2S]-[ferredoxin] + S-adenosyl-L-homocysteine. In terms of biological role, specifically methylates position 2 of adenine 2503 in 23S rRNA and position 2 of adenine 37 in tRNAs. m2A2503 modification seems to play a crucial role in the proofreading step occurring at the peptidyl transferase center and thus would serve to optimize ribosomal fidelity. This is Dual-specificity RNA methyltransferase RlmN from Neisseria meningitidis serogroup A / serotype 4A (strain DSM 15465 / Z2491).